The following is a 123-amino-acid chain: SLIQFETLIMKVVKKSGMFWYSAYGCYCGWGGHGRPQDATDRCCFVHDCCYGKVTGCDPKMDSYTYSEENGDIVCGGDDPCKREICECDRVAAVCFRDNLDTYNSDTYWRYPTKNCQEEPDPC.

7 disulfides stabilise this stretch: cysteine 26-cysteine 116, cysteine 28-cysteine 44, cysteine 43-cysteine 95, cysteine 49-cysteine 123, cysteine 50-cysteine 88, cysteine 57-cysteine 81, and cysteine 75-cysteine 86. Ca(2+) is bound by residues tyrosine 27, glycine 29, and glycine 31. Histidine 47 is a catalytic residue. Aspartate 48 is a binding site for Ca(2+). Aspartate 89 is an active-site residue.

Belongs to the phospholipase A2 family. Group II subfamily. D49 sub-subfamily. In terms of assembly, homodimer. Ca(2+) is required as a cofactor. Expressed by the venom gland.

It localises to the secreted. The catalysed reaction is a 1,2-diacyl-sn-glycero-3-phosphocholine + H2O = a 1-acyl-sn-glycero-3-phosphocholine + a fatty acid + H(+). Snake venom phospholipase A2 (PLA2) that inhibits ADP-induced platelet aggregation. PLA2 catalyzes the calcium-dependent hydrolysis of the 2-acyl groups in 3-sn-phosphoglycerides. In Deinagkistrodon acutus (Hundred-pace snake), this protein is Acidic phospholipase A2.